The following is a 221-amino-acid chain: Histone H1.3 (221 aa).

The segment covering 1-17 (MSETAPVAPAAPAPAEK) has biased composition (low complexity). The disordered stretch occupies residues 1–42 (MSETAPVAPAAPAPAEKTPVKKKAKKSGVAAGKRKASGPPVS). Ser-2 carries the post-translational modification N-acetylserine. Ser-2 bears the Phosphoserine mark. Lys-17 is subject to N6-acetyllysine. Phosphothreonine is present on Thr-18. Residues 20–36 (VKKKAKKSGVAAGKRKA) are compositionally biased toward basic residues. N6-(beta-hydroxybutyryl)lysine occurs at positions 35 and 53. In terms of domain architecture, H15 spans 37–110 (SGPPVSELIT…GASGSFKLNK (74 aa)). Arg-55 carries the post-translational modification Citrulline. An N6-(beta-hydroxybutyryl)lysine mark is found at Lys-65, Lys-86, and Lys-91. The interval 87 to 221 (SLVSKGTLVQ…KAKKAVSKKK (135 aa)) is disordered. Ser-105 is subject to Phosphoserine; by PKC. The residue at position 107 (Lys-107) is an N6-(beta-hydroxybutyryl)lysine. Basic residues-rich tracts occupy residues 120-141 (KGKK…KPKK), 150-161 (KAAKKTPKKVKK), 170-187 (KVAK…KKPT), and 194-221 (KAPK…SKKK).

It belongs to the histone H1/H5 family. H1 histones are progressively phosphorylated during the cell cycle, becoming maximally phosphorylated during late G2 phase and M phase, and being dephosphorylated sharply thereafter. In terms of processing, citrullination at Arg-55 (H1R54ci) by PADI4 takes place within the DNA-binding site of H1 and results in its displacement from chromatin and global chromatin decondensation, thereby promoting pluripotency and stem cell maintenance.

It is found in the nucleus. Its subcellular location is the chromosome. In terms of biological role, H1 histones bind to linker DNA between nucleosomes forming the macromolecular structure known as the chromatin fiber. H1 histones are necessary for the condensation of nucleosome chains into higher-order structured fibers. Also acts as a regulator of individual gene transcription through chromatin remodeling, nucleosome spacing and DNA methylation. The sequence is that of Histone H1.3 from Bos taurus (Bovine).